Here is a 788-residue protein sequence, read N- to C-terminus: 5-methyltetrahydropteroyltriglutamate--homocysteine methyltransferase (788 aa).

5-methyltetrahydropteroyltri-L-glutamate contacts are provided by residues 24 to 27 and K140; that span reads RELK. Residues 463–465 and E516 each bind L-homocysteine; that span reads IGS. L-methionine is bound by residues 463-465 and E516; that span reads IGS. 5-methyltetrahydropteroyltri-L-glutamate-binding positions include 547–548 and W593; that span reads RC. L-homocysteine is bound at residue D631. D631 serves as a coordination point for L-methionine. E637 contacts 5-methyltetrahydropteroyltri-L-glutamate. Residues H673, C675, and E697 each contribute to the Zn(2+) site. Residue H726 is the Proton donor of the active site. C758 is a Zn(2+) binding site.

This sequence belongs to the vitamin-B12 independent methionine synthase family. Zn(2+) is required as a cofactor.

It catalyses the reaction 5-methyltetrahydropteroyltri-L-glutamate + L-homocysteine = tetrahydropteroyltri-L-glutamate + L-methionine. Its pathway is amino-acid biosynthesis; L-methionine biosynthesis via de novo pathway; L-methionine from L-homocysteine (MetE route): step 1/1. Its function is as follows. Catalyzes the transfer of a methyl group from 5-methyltetrahydrofolate to homocysteine resulting in methionine formation. This chain is 5-methyltetrahydropteroyltriglutamate--homocysteine methyltransferase, found in Rhodopseudomonas palustris (strain TIE-1).